The sequence spans 251 residues: Imidazole glycerol phosphate synthase subunit HisF (251 aa).

Catalysis depends on residues Asp-11 and Asp-130.

The protein belongs to the HisA/HisF family. Heterodimer of HisH and HisF.

The protein localises to the cytoplasm. The enzyme catalyses 5-[(5-phospho-1-deoxy-D-ribulos-1-ylimino)methylamino]-1-(5-phospho-beta-D-ribosyl)imidazole-4-carboxamide + L-glutamine = D-erythro-1-(imidazol-4-yl)glycerol 3-phosphate + 5-amino-1-(5-phospho-beta-D-ribosyl)imidazole-4-carboxamide + L-glutamate + H(+). Its pathway is amino-acid biosynthesis; L-histidine biosynthesis; L-histidine from 5-phospho-alpha-D-ribose 1-diphosphate: step 5/9. IGPS catalyzes the conversion of PRFAR and glutamine to IGP, AICAR and glutamate. The HisF subunit catalyzes the cyclization activity that produces IGP and AICAR from PRFAR using the ammonia provided by the HisH subunit. The sequence is that of Imidazole glycerol phosphate synthase subunit HisF from Chlorobaculum tepidum (strain ATCC 49652 / DSM 12025 / NBRC 103806 / TLS) (Chlorobium tepidum).